Here is a 163-residue protein sequence, read N- to C-terminus: D-aminoacyl-tRNA deacylase (163 aa).

The short motif at 141–142 (GP) is the Gly-cisPro motif, important for rejection of L-amino acids element.

It belongs to the DTD family. As to quaternary structure, homodimer.

It is found in the cytoplasm. It catalyses the reaction glycyl-tRNA(Ala) + H2O = tRNA(Ala) + glycine + H(+). The catalysed reaction is a D-aminoacyl-tRNA + H2O = a tRNA + a D-alpha-amino acid + H(+). In terms of biological role, an aminoacyl-tRNA editing enzyme that deacylates mischarged D-aminoacyl-tRNAs. Also deacylates mischarged glycyl-tRNA(Ala), protecting cells against glycine mischarging by AlaRS. Acts via tRNA-based rather than protein-based catalysis; rejects L-amino acids rather than detecting D-amino acids in the active site. By recycling D-aminoacyl-tRNA to D-amino acids and free tRNA molecules, this enzyme counteracts the toxicity associated with the formation of D-aminoacyl-tRNA entities in vivo and helps enforce protein L-homochirality. In Neisseria meningitidis serogroup B (strain ATCC BAA-335 / MC58), this protein is D-aminoacyl-tRNA deacylase.